The sequence spans 429 residues: DNA polymerase delta small subunit (429 aa).

The protein belongs to the DNA polymerase delta/II small subunit family. As to quaternary structure, heterodimer with subunits of 125 kDa and 50 kDa.

Its subcellular location is the nucleus. The catalysed reaction is DNA(n) + a 2'-deoxyribonucleoside 5'-triphosphate = DNA(n+1) + diphosphate. Its function is as follows. The function of the small subunit is not yet clear. The polypeptide is DNA polymerase delta small subunit (POLD2) (Oryza sativa subsp. japonica (Rice)).